A 162-amino-acid polypeptide reads, in one-letter code: Putative ethylene-responsive transcription factor ERF121 (162 aa).

3 disordered regions span residues 1–21, 84–103, and 139–162; these read MDYSENVQNKNFTPISQPPNL, IKQEKKHKGVRKKPSGKWSA, and KRSARRGSKKGEGSIHQEVGGGDD. The segment covering 87–98 has biased composition (basic residues); the sequence is EKKHKGVRKKPS. The AP2/ERF DNA-binding region spans 89-146; it reads KHKGVRKKPSGKWSAEIWDPSTRTRRWLGTFPTAEMAADAYDEAAAALVEKRSARRGS.

It belongs to the AP2/ERF transcription factor family. ERF subfamily.

It is found in the nucleus. In terms of biological role, probably acts as a transcriptional activator. Binds to the GCC-box pathogenesis-related promoter element. May be involved in the regulation of gene expression by stress factors and by components of stress signal transduction pathways. In Arabidopsis thaliana (Mouse-ear cress), this protein is Putative ethylene-responsive transcription factor ERF121 (ERF121).